Reading from the N-terminus, the 200-residue chain is MSNSAQRDARNSRDESARASDTDRIQIAQLLAYAAEQGRLQLTDYEDRLARAYAATTYQELDRLRADLPGAAIGPRRGGECNPAPSTLLLALLGGFERRGRWNVPKKLTTFTLWGSGVLDLRYADFTSTEVDIRAYSIMGAQTILLPPEVNVEIHGHRVMGGFDRKVVGEGTRGVPTVRIRGFSLWGDVGIKRKPRKPRK.

Positions 1-21 (MSNSAQRDARNSRDESARASD) are disordered. Residues 7–21 (RDARNSRDESARASD) show a composition bias toward basic and acidic residues.

This is an uncharacterized protein from Mycobacterium tuberculosis (strain ATCC 25618 / H37Rv).